The chain runs to 374 residues: Zinc finger CCCH domain-containing protein 15 homolog (374 aa).

The segment at 1-20 (MPPKQQGPSKKSEQKRKEKV) is disordered. A compositionally biased stretch (basic and acidic residues) spans 10 to 20 (KKSEQKRKEKV). 2 consecutive C3H1-type zinc fingers follow at residues 90 to 117 (DPKSLLCVFFKQGLCGKGAKCKFSHDLA) and 166 to 199 (VCKYFLEAVENNKYGWFWECPNGGEKCQYRHCLP).

This sequence belongs to the ZC3H15/TMA46 family.

In Caenorhabditis elegans, this protein is Zinc finger CCCH domain-containing protein 15 homolog.